The primary structure comprises 398 residues: Dual-specificity RNA methyltransferase RlmN (398 aa).

Glu119 acts as the Proton acceptor in catalysis. Positions 125-364 constitute a Radical SAM core domain; sequence EADRATLCVS…TIVRKTRGDD (240 aa). An intrachain disulfide couples Cys132 to Cys369. The [4Fe-4S] cluster site is built by Cys139, Cys143, and Cys146. S-adenosyl-L-methionine-binding positions include 193–194, Ser225, 247–249, and Asn326; these read GE and SLH. Cys369 (S-methylcysteine intermediate) is an active-site residue.

Belongs to the radical SAM superfamily. RlmN family. [4Fe-4S] cluster is required as a cofactor.

It localises to the cytoplasm. It carries out the reaction adenosine(2503) in 23S rRNA + 2 reduced [2Fe-2S]-[ferredoxin] + 2 S-adenosyl-L-methionine = 2-methyladenosine(2503) in 23S rRNA + 5'-deoxyadenosine + L-methionine + 2 oxidized [2Fe-2S]-[ferredoxin] + S-adenosyl-L-homocysteine. It catalyses the reaction adenosine(37) in tRNA + 2 reduced [2Fe-2S]-[ferredoxin] + 2 S-adenosyl-L-methionine = 2-methyladenosine(37) in tRNA + 5'-deoxyadenosine + L-methionine + 2 oxidized [2Fe-2S]-[ferredoxin] + S-adenosyl-L-homocysteine. In terms of biological role, specifically methylates position 2 of adenine 2503 in 23S rRNA and position 2 of adenine 37 in tRNAs. m2A2503 modification seems to play a crucial role in the proofreading step occurring at the peptidyl transferase center and thus would serve to optimize ribosomal fidelity. This chain is Dual-specificity RNA methyltransferase RlmN, found in Yersinia pseudotuberculosis serotype O:3 (strain YPIII).